The chain runs to 198 residues: NAD(P)H dehydrogenase (quinone) (198 aa).

The region spanning 4–189 (VLVLYYSMYG…ALARYQGRHV (186 aa)) is the Flavodoxin-like domain. Residues 10 to 15 (SMYGHV) and 78 to 80 (TRF) each bind FMN. Tyr12 contacts NAD(+). Residue Trp98 participates in substrate binding. Residues 113–118 (STGTGG) and His133 each bind FMN.

The protein belongs to the WrbA family. It depends on FMN as a cofactor.

It catalyses the reaction a quinone + NADH + H(+) = a quinol + NAD(+). The enzyme catalyses a quinone + NADPH + H(+) = a quinol + NADP(+). This chain is NAD(P)H dehydrogenase (quinone), found in Halorhodospira halophila (strain DSM 244 / SL1) (Ectothiorhodospira halophila (strain DSM 244 / SL1)).